The primary structure comprises 754 residues: Anaphase-promoting complex subunit cdh1 (754 aa).

Over residues 1–10 (MFHSEYEKKL) the composition is skewed to basic and acidic residues. Disordered stretches follow at residues 1-30 (MFHS…YSNN), 47-116 (YEDN…TTTT), and 200-351 (IFNN…NNNN). 2 stretches are compositionally biased toward low complexity: residues 50-116 (NGSN…TTTT) and 202-325 (NNNN…ININ). The segment covering 326–339 (QSPSKKQSLMSATM) has biased composition (polar residues). The segment covering 340–351 (NNNNSNNNNNNN) has biased composition (low complexity). WD repeat units lie at residues 411–448 (KDDF…VSKL), 452–492 (ESGQ…KIRE), 495–532 (GHNT…NNYT), and 537–576 (GHRH…QPQQ). The tract at residues 570 to 598 (MTQQPQQQHQPPPPPPSSNTSSISQQQQQ) is disordered. The segment covering 587–598 (SNTSSISQQQQQ) has biased composition (low complexity). WD repeat units lie at residues 610-652 (FHYA…SIQS), 654-695 (DTGS…PVTT), and 698-737 (GHTM…KESS).

This sequence belongs to the WD repeat CDC20/Fizzy family. The APC/C is composed of at least 13 subunits that stay tightly associated throughout the cell cycle: anapc1, anapc2, anapc3, anapc4, anapc5, anapc6, anapc7, anapc8, anapc10, anapc11, cdc20, cdc26 and cdh1.

It localises to the nucleus. It functions in the pathway protein modification; protein ubiquitination. Functionally, component of the anaphase promoting complex/cyclosome (APC/C), a cell cycle-regulated E3 ubiquitin-protein ligase complex that controls progression through mitosis and the G1 phase of the cell cycle. The sequence is that of Anaphase-promoting complex subunit cdh1 (cdh1) from Dictyostelium discoideum (Social amoeba).